Here is a 368-residue protein sequence, read N- to C-terminus: DNA replication and repair protein RecF (368 aa).

30–37 (GKNGSGKT) lines the ATP pocket.

This sequence belongs to the RecF family.

It is found in the cytoplasm. Its function is as follows. The RecF protein is involved in DNA metabolism; it is required for DNA replication and normal SOS inducibility. RecF binds preferentially to single-stranded, linear DNA. It also seems to bind ATP. This Marinomonas sp. (strain MWYL1) protein is DNA replication and repair protein RecF.